The primary structure comprises 175 residues: MGYLRNIGAIAKGMGITFSEMFKPTTVENYPDGPGVLRGAVFQERFRGMHVLQRDENGLEKCVACFLCAAACPSNCIYIEAAENTETNRVSGAERYAKVYNIDYNRCIFCGYCVEACPTDAITHGHGFELATFNASNLVYRKEQLLSGKPAHIGANEIFASDSREQQRLDQKAAK.

4Fe-4S ferredoxin-type domains lie at 50–82 (HVLQ…IEAA) and 98–127 (KVYN…HGHG). [4Fe-4S] cluster-binding residues include Cys-62, Cys-65, Cys-68, Cys-72, Cys-107, Cys-110, Cys-113, and Cys-117.

Belongs to the complex I 23 kDa subunit family. NDH-1 is composed of 14 different subunits. Subunits NuoA, H, J, K, L, M, N constitute the membrane sector of the complex. Requires [4Fe-4S] cluster as cofactor.

Its subcellular location is the cell inner membrane. It carries out the reaction a quinone + NADH + 5 H(+)(in) = a quinol + NAD(+) + 4 H(+)(out). In terms of biological role, NDH-1 shuttles electrons from NADH, via FMN and iron-sulfur (Fe-S) centers, to quinones in the respiratory chain. The immediate electron acceptor for the enzyme in this species is believed to be ubiquinone. Couples the redox reaction to proton translocation (for every two electrons transferred, four hydrogen ions are translocated across the cytoplasmic membrane), and thus conserves the redox energy in a proton gradient. This is NADH-quinone oxidoreductase subunit I 2 from Koribacter versatilis (strain Ellin345).